A 100-amino-acid polypeptide reads, in one-letter code: EKC/KEOPS complex subunit GON7 (100 aa).

N-acetylmethionine is present on Met1. The segment at 50–100 (SPVQGEAQDRVAAAPEEALDGDDEDDAEDENNIDNRTNSDGPTAKRPKPPS) is disordered. A compositionally biased stretch (acidic residues) spans 66–81 (EALDGDDEDDAEDENN).

Component of the EKC/KEOPS complex composed of at least GON7, TP53RK, TPRKB, OSGEP and LAGE3; the whole complex dimerizes.

The protein resides in the nucleus. Functionally, component of the EKC/KEOPS complex that is required for the formation of a threonylcarbamoyl group on adenosine at position 37 (t(6)A37) in tRNAs that read codons beginning with adenine. The complex is probably involved in the transfer of the threonylcarbamoyl moiety of threonylcarbamoyl-AMP (TC-AMP) to the N6 group of A37. GON7 plays a supporting role to the catalytic subunit OSGEP in the complex. This chain is EKC/KEOPS complex subunit GON7, found in Sus scrofa (Pig).